Here is a 454-residue protein sequence, read N- to C-terminus: UPF0210 protein BAD_1323 (454 aa).

This sequence belongs to the UPF0210 family. As to quaternary structure, homodimer.

The chain is UPF0210 protein BAD_1323 from Bifidobacterium adolescentis (strain ATCC 15703 / DSM 20083 / NCTC 11814 / E194a).